The primary structure comprises 677 residues: Zinc finger and BTB domain-containing protein 5 (677 aa).

One can recognise a BTB domain in the interval 24–93 (CDCVIVVGNR…MYTSTLMLGE (70 aa)). The segment covering 158–181 (LNSSQNGEEQPAPMSSSMRSNLDQ) has biased composition (polar residues). Disordered regions lie at residues 158-252 (LNSS…MTDN) and 287-312 (SMAS…SFQC). A Phosphoserine modification is found at serine 234. Lysine 239 participates in a covalent cross-link: Glycyl lysine isopeptide (Lys-Gly) (interchain with G-Cter in SUMO2). The segment covering 287–300 (SMASRATQVETSFD) has biased composition (polar residues). Residues lysine 322 and lysine 330 each participate in a glycyl lysine isopeptide (Lys-Gly) (interchain with G-Cter in SUMO2) cross-link. The segment at 331 to 387 (SEPLSSPEPQDEVSDVTSQAEGSESVEVEGVVVSAEKIDLSPESSDRSFSDPQSSTD) is disordered. The segment covering 350-365 (AEGSESVEVEGVVVSA) has biased composition (low complexity). Positions 366–379 (EKIDLSPESSDRSF) are enriched in basic and acidic residues. Residue serine 371 is modified to Phosphoserine. Glycyl lysine isopeptide (Lys-Gly) (interchain with G-Cter in SUMO2) cross-links involve residues lysine 404 and lysine 415. Residues 447 to 474 (LLSPEAGPAGGPSSAPGSHVENPFSEPA) are disordered. A compositionally biased stretch (low complexity) spans 449–464 (SPEAGPAGGPSSAPGS). Lysine 541 participates in a covalent cross-link: Glycyl lysine isopeptide (Lys-Gly) (interchain with G-Cter in SUMO2). Positions 552 to 576 (QIPENSTSSQLMMNGATSSFENGHP) are enriched in polar residues. The disordered stretch occupies residues 552 to 585 (QIPENSTSSQLMMNGATSSFENGHPSQPGPPQLT). Residues lysine 594 and lysine 597 each participate in a glycyl lysine isopeptide (Lys-Gly) (interchain with G-Cter in SUMO2) cross-link. The C2H2-type 1 zinc-finger motif lies at 613–635 (YACKICCKTFLTLTDCKKHIRVH). The segment at 641-664 (YACLKCGKRFSQSSHLYKHSKTTC) adopts a C2H2-type 2; atypical zinc-finger fold. Residues lysine 645 and lysine 658 each participate in a glycyl lysine isopeptide (Lys-Gly) (interchain with G-Cter in SUMO2) cross-link.

The protein resides in the nucleus. Its function is as follows. May be involved in transcriptional regulation. This chain is Zinc finger and BTB domain-containing protein 5 (ZBTB5), found in Homo sapiens (Human).